The following is a 52-amino-acid chain: Teratocyte protein CftICK-I (52 aa).

The first 19 residues, 1–19 (MYKLCILFLVVIFAVMAIA), serve as a signal peptide directing secretion. Intrachain disulfides connect Cys-22–Cys-37, Cys-29–Cys-41, and Cys-36–Cys-51.

In terms of tissue distribution, abundantly expressed by teratocytes, which are extra-embryonic cells released by parasitoid wasps into their hosts during larval eclosion.

The protein localises to the secreted. This endoparasitoid wasp peptide has immununosuppressive, antimicrobial and insecticidal activities. Suppress cellular immunity which is detectable as a reduction of hemocyte encapsulation in the host. Shows potent antifungal activity against C.albicans (MIC~0.25 ug/ml). In vivo, ingestion of this peptide (probably at excessive doses) increases larval mortality and reduces leaf consumption of D.saccharalis, a permissive host for C.flavipes. The sequence is that of Teratocyte protein CftICK-I from Cotesia flavipes (Parasitic wasp).